Here is a 428-residue protein sequence, read N- to C-terminus: Putative zinc metalloprotease SAR1238 (428 aa).

His-21 contacts Zn(2+). The active site involves Glu-22. Zn(2+) is bound at residue His-25. The next 4 helical transmembrane spans lie at 172–194, 309–331, 352–374, and 401–420; these read FLTLFAGPLFNFILALVLFIGLA, GSTYIFSAVVGMLASIFTGGFSF, IISLIGYTALLSVNLGIMNLIPI, and TTIIAIGAIFMVVIMILVTW. The 84-residue stretch at 186–269 folds into the PDZ domain; that stretch reads ALVLFIGLAY…TKSVELTPKK (84 aa).

This sequence belongs to the peptidase M50B family. Requires Zn(2+) as cofactor.

It localises to the cell membrane. This is Putative zinc metalloprotease SAR1238 from Staphylococcus aureus (strain MRSA252).